Consider the following 206-residue polypeptide: ATP-dependent Clp protease proteolytic subunit 2 (206 aa).

S100 (nucleophile) is an active-site residue. The active site involves H125.

The protein belongs to the peptidase S14 family. As to quaternary structure, fourteen ClpP subunits assemble into 2 heptameric rings which stack back to back to give a disk-like structure with a central cavity, resembling the structure of eukaryotic proteasomes.

Its subcellular location is the cytoplasm. It catalyses the reaction Hydrolysis of proteins to small peptides in the presence of ATP and magnesium. alpha-casein is the usual test substrate. In the absence of ATP, only oligopeptides shorter than five residues are hydrolyzed (such as succinyl-Leu-Tyr-|-NHMec, and Leu-Tyr-Leu-|-Tyr-Trp, in which cleavage of the -Tyr-|-Leu- and -Tyr-|-Trp bonds also occurs).. Functionally, cleaves peptides in various proteins in a process that requires ATP hydrolysis. Has a chymotrypsin-like activity. Plays a major role in the degradation of misfolded proteins. The polypeptide is ATP-dependent Clp protease proteolytic subunit 2 (Myxococcus xanthus).